Here is a 242-residue protein sequence, read N- to C-terminus: uncharacterized protein (242 aa).

This is an uncharacterized protein from Haemophilus influenzae (strain ATCC 51907 / DSM 11121 / KW20 / Rd).